The chain runs to 465 residues: Ribulose bisphosphate carboxylase large chain (465 aa).

Position 4 is an N6,N6,N6-trimethyllysine (Lys4). Asn113 and Thr163 together coordinate substrate. Catalysis depends on Lys165, which acts as the Proton acceptor. Lys167 is a substrate binding site. Mg(2+)-binding residues include Lys191, Asp193, and Glu194. Lys191 is modified (N6-carboxylysine). The active-site Proton acceptor is the His284. Substrate contacts are provided by Arg285, His317, and Ser369.

It belongs to the RuBisCO large chain family. Type I subfamily. Heterohexadecamer of 8 large chains and 8 small chains; disulfide-linked. The disulfide link is formed within the large subunit homodimers. Mg(2+) is required as a cofactor. Post-translationally, the disulfide bond which can form in the large chain dimeric partners within the hexadecamer appears to be associated with oxidative stress and protein turnover.

Its subcellular location is the plastid. The protein localises to the chloroplast. The enzyme catalyses 2 (2R)-3-phosphoglycerate + 2 H(+) = D-ribulose 1,5-bisphosphate + CO2 + H2O. It carries out the reaction D-ribulose 1,5-bisphosphate + O2 = 2-phosphoglycolate + (2R)-3-phosphoglycerate + 2 H(+). Functionally, ruBisCO catalyzes two reactions: the carboxylation of D-ribulose 1,5-bisphosphate, the primary event in carbon dioxide fixation, as well as the oxidative fragmentation of the pentose substrate in the photorespiration process. Both reactions occur simultaneously and in competition at the same active site. The sequence is that of Ribulose bisphosphate carboxylase large chain from Securidaca diversifolia (Easter flower).